The following is a 288-amino-acid chain: 2-methoxy-6-polyprenyl-1,4-benzoquinol methylase, mitochondrial (288 aa).

Positions 68, 102, and 146 each coordinate S-adenosyl-L-methionine. A compositionally biased stretch (low complexity) spans 260 to 270 (PITPTTSSDIP). Positions 260–288 (PITPTTSSDIPAQNTSEATCEVKPEPNSA) are disordered. Positions 279 to 288 (CEVKPEPNSA) are enriched in basic and acidic residues.

It belongs to the class I-like SAM-binding methyltransferase superfamily. MenG/UbiE family. Component of a multi-subunit COQ enzyme complex.

Its subcellular location is the mitochondrion inner membrane. It carries out the reaction a 2-methoxy-6-(all-trans-polyprenyl)benzene-1,4-diol + S-adenosyl-L-methionine = a 5-methoxy-2-methyl-3-(all-trans-polyprenyl)benzene-1,4-diol + S-adenosyl-L-homocysteine + H(+). Its pathway is cofactor biosynthesis; ubiquinone biosynthesis. Methyltransferase required for the conversion of 2-polyprenyl-6-methoxy-1,4-benzoquinol (DDMQH2) to 2-polyprenyl-3-methyl-6-methoxy-1,4-benzoquinol (DMQH2). This is 2-methoxy-6-polyprenyl-1,4-benzoquinol methylase, mitochondrial from Leishmania donovani.